The primary structure comprises 441 residues: MKERSTELVQGFRHSVPYINAHRGKTFVVMLGGEAIEHENFSSIVNDIGLLHSLGIRLVVVYGARPQIDSNLADHNYEPIYHKHTRVTDARTLEMVKQAAGLLQLDITARLSMSLNNTPLQGAHINVVSGNFIIAQPLGVDDGVDYCHSGRIRRIDEEAIHRQLDNGAIVLLGPVAVSVTGESFNLTSEEVATQLAIKLKAEKMIGFCSSQGVTDSEGNIISELFPNDAQKRIEDLEQDGDYNSGTVRFLRGAVKACRSGVRRSHLLSYQEDGALIQELFSRDGIGTQIVMESAEQVRRATINDIGGILELIRPLEQQGILVRRSREQLEMEIDKFTIIERDNLTIACAALYPFPDEHIGEMACVAVHPDYRSSSRGEMLLNRITNQARQMGLKKLFVLTTRSIHWFQERGFTPAEVDVLPIQKQELYNYQRRSKILLADL.

In terms of domain architecture, N-acetyltransferase spans 295–434; the sequence is EQVRRATIND…QELYNYQRRS (140 aa).

Belongs to the acetyltransferase family. ArgA subfamily. As to quaternary structure, homohexamer.

It is found in the cytoplasm. The catalysed reaction is L-glutamate + acetyl-CoA = N-acetyl-L-glutamate + CoA + H(+). It functions in the pathway amino-acid biosynthesis; L-arginine biosynthesis; N(2)-acetyl-L-ornithine from L-glutamate: step 1/4. The protein is Amino-acid acetyltransferase of Yersinia pseudotuberculosis serotype O:1b (strain IP 31758).